A 728-amino-acid chain; its full sequence is Catalase-peroxidase (728 aa).

A disordered region spans residues Met-1–Asp-26. Positions Trp-96 to Tyr-218 form a cross-link, tryptophyl-tyrosyl-methioninium (Trp-Tyr) (with M-244). The Proton acceptor role is filled by His-97. Positions Tyr-218 to Met-244 form a cross-link, tryptophyl-tyrosyl-methioninium (Tyr-Met) (with W-96). His-259 serves as a coordination point for heme b.

The protein belongs to the peroxidase family. Peroxidase/catalase subfamily. Homodimer or homotetramer. Requires heme b as cofactor. Formation of the three residue Trp-Tyr-Met cross-link is important for the catalase, but not the peroxidase activity of the enzyme.

The enzyme catalyses H2O2 + AH2 = A + 2 H2O. The catalysed reaction is 2 H2O2 = O2 + 2 H2O. Its function is as follows. Bifunctional enzyme with both catalase and broad-spectrum peroxidase activity. The polypeptide is Catalase-peroxidase (Rhizobium etli (strain CIAT 652)).